The following is a 142-amino-acid chain: Large ribosomal subunit protein uL13 (142 aa).

This sequence belongs to the universal ribosomal protein uL13 family. As to quaternary structure, part of the 50S ribosomal subunit.

This protein is one of the early assembly proteins of the 50S ribosomal subunit, although it is not seen to bind rRNA by itself. It is important during the early stages of 50S assembly. This Xylella fastidiosa (strain M23) protein is Large ribosomal subunit protein uL13.